A 153-amino-acid chain; its full sequence is 6,7-dimethyl-8-ribityllumazine synthase (153 aa).

5-amino-6-(D-ribitylamino)uracil contacts are provided by residues phenylalanine 22, 56 to 58 (AFE), and 80 to 82 (TVI). 85-86 (ST) is a (2S)-2-hydroxy-3-oxobutyl phosphate binding site. Histidine 88 serves as the catalytic Proton donor. 5-amino-6-(D-ribitylamino)uracil is bound at residue phenylalanine 113. Arginine 127 provides a ligand contact to (2S)-2-hydroxy-3-oxobutyl phosphate.

It belongs to the DMRL synthase family. Forms an icosahedral capsid composed of 60 subunits, arranged as a dodecamer of pentamers.

It carries out the reaction (2S)-2-hydroxy-3-oxobutyl phosphate + 5-amino-6-(D-ribitylamino)uracil = 6,7-dimethyl-8-(1-D-ribityl)lumazine + phosphate + 2 H2O + H(+). It functions in the pathway cofactor biosynthesis; riboflavin biosynthesis; riboflavin from 2-hydroxy-3-oxobutyl phosphate and 5-amino-6-(D-ribitylamino)uracil: step 1/2. Functionally, catalyzes the formation of 6,7-dimethyl-8-ribityllumazine by condensation of 5-amino-6-(D-ribitylamino)uracil with 3,4-dihydroxy-2-butanone 4-phosphate. This is the penultimate step in the biosynthesis of riboflavin. In Glaesserella parasuis serovar 5 (strain SH0165) (Haemophilus parasuis), this protein is 6,7-dimethyl-8-ribityllumazine synthase.